The chain runs to 469 residues: Bile acid receptor (469 aa).

Lysine 119 participates in a covalent cross-link: Glycyl lysine isopeptide (Lys-Gly) (interchain with G-Cter in SUMO1). The nuclear receptor DNA-binding region spans 121–196 (DELCVVCGDR…MGMLAECLLT (76 aa)). Residues 124–144 (CVVCGDRASGYHYNALTCEGC) form an NR C4-type zinc finger. A phosphoserine; by PKC/PRKCA mark is found at serine 132 and serine 151. N6-acetyllysine; by EP300 is present on lysine 154. An NR C4-type zinc finger spans residues 160-184 (CKNGGNCVMDMYMRRKCQDCRLRKC). N6-methyllysine; by SETD7 is present on lysine 203. Position 210 is an N6-acetyllysine; by EP300 (lysine 210). The NR LBD domain maps to 245-469 (DQQTLLDYIM…PLLCEIWDVQ (225 aa)). Lysine 272 is covalently cross-linked (Glycyl lysine isopeptide (Lys-Gly) (interchain with G-Cter in SUMO1)). Residue arginine 328 participates in 3beta,7beta-dihydroxy-5beta-cholan-24-oate binding. Chenodeoxycholate is bound by residues arginine 328, tyrosine 358, and tyrosine 366. Tyrosine 366 serves as a coordination point for 3beta,7beta-dihydroxy-5beta-cholan-24-oate. Threonine 439 carries the phosphothreonine; by PKC/PRKCZ modification. A chenodeoxycholate-binding site is contributed by histidine 444.

It belongs to the nuclear hormone receptor family. NR1 subfamily. Heterodimer with RXRA; the heterodimerization enhances the binding affinity for LXXLL motifs from coactivators. Binds DNA predominantly as a heterodimer with RXRA. After activation by agonist binding interacts with coactivators. Interacts with NCOA1, NCOA2, PPARGC1A, CARM1, SETD7, PRMT1, GPS2, SMARCA4 and MED1, EP300 and SMARCD1. Interacts with XRCC5 and XRCC6; decreasing NR1H4/FXR transactivation activity towards ABCB11/BSEP. Interacts with PAGR1 AND NCOA6; indicative for an association with an MLL2/MLL3 complex (ASCOM). Acetylated by EP300. Lys-210 as is the major acetylation site for EP300; the dynamicly regulated acetylation inhibits heterodimerization with RXRA and transactivation activity. Deacetylated by SIRT1. Post-translationally, methylation may increase transactivation of target genes. In terms of processing, phosphorylation by PKC/PRKCA increases transactivation activity by promoting association with PPARGC1A. Sumoylated upon ligand binding.

It is found in the nucleus. Functionally, ligand-activated transcription factor. Receptor for bile acids (BAs) such as chenodeoxycholic acid (CDCA), lithocholic acid, deoxycholic acid (DCA) and allocholic acid (ACA). Plays a essential role in BA homeostasis through the regulation of genes involved in BA synthesis, conjugation and enterohepatic circulation. Also regulates lipid and glucose homeostasis and is involved innate immune response. The FXR-RXR heterodimer binds predominantly to farnesoid X receptor response elements (FXREs) containing two inverted repeats of the consensus sequence 5'-AGGTCA-3' in which the monomers are spaced by 1 nucleotide (IR-1) but also to tandem repeat DR1 sites with lower affinity, and can be activated by either FXR or RXR-specific ligands. It is proposed that monomeric nuclear receptors such as NR5A2/LRH-1 bound to coregulatory nuclear responsive element (NRE) halfsites located in close proximity to FXREs modulate transcriptional activity. In the liver activates transcription of the corepressor NR0B2 thereby indirectly inhibiting CYP7A1 and CYP8B1 (involved in BA synthesis) implicating at least in part histone demethylase KDM1A resulting in epigenomic repression, and SLC10A1/NTCP (involved in hepatic uptake of conjugated BAs). Activates transcription of the repressor MAFG (involved in regulation of BA synthesis). Activates transcription of SLC27A5/BACS and BAAT (involved in BA conjugation), ABCB11/BSEP (involved in bile salt export) by directly recruiting histone methyltransferase CARM1, and ABCC2/MRP2 (involved in secretion of conjugated BAs) and ABCB4 (involved in secretion of phosphatidylcholine in the small intestine). Activates transcription of SLC27A5/BACS and BAAT (involved in BA conjugation), ABCB11/BSEP (involved in bile salt export) by directly recruiting histone methyltransferase CARM1, and ABCC2/MRP2 (involved in secretion of conjugated BAs) and ABCB4 (involved in secretion of phosphatidylcholine in the small intestine). In the intestine activates FGF19 expression and secretion leading to hepatic CYP7A1 repression. The function also involves the coordinated induction of hepatic KLB/beta-klotho expression. Regulates transcription of liver UGT2B4 and SULT2A1 involved in BA detoxification; binding to the UGT2B4 promoter seems to imply a monomeric transactivation independent of RXRA. Modulates lipid homeostasis by activating liver NR0B2/SHP-mediated repression of SREBF1 (involved in de novo lipogenesis), expression of PLTP (involved in HDL formation), SCARB1 (involved in HDL hepatic uptake), APOE, APOC1, APOC4, PPARA (involved in beta-oxidation of fatty acids), VLDLR and SDC1 (involved in the hepatic uptake of LDL and IDL remnants), and inhibiting expression of MTTP (involved in VLDL assembly). Increases expression of APOC2 (promoting lipoprotein lipase activity implicated in triglyceride clearance). Transrepresses APOA1 involving a monomeric competition with NR2A1 for binding to a DR1 element. Also reduces triglyceride clearance by inhibiting expression of ANGPTL3 and APOC3 (both involved in inhibition of lipoprotein lipase). Involved in glucose homeostasis by modulating hepatic gluconeogenesis through activation of NR0B2/SHP-mediated repression of respective genes. Modulates glycogen synthesis (inducing phosphorylation of glycogen synthase kinase-3). Modulates glucose-stimulated insulin secretion and is involved in insulin resistance. Involved in intestinal innate immunity. Plays a role in protecting the distal small intestine against bacterial overgrowth and preservation of the epithelial barrier. Down-regulates inflammatory cytokine expression in several types of immune cells including macrophages and mononuclear cells. Mediates trans-repression of TLR4-induced cytokine expression; the function seems to require its sumoylation and prevents N-CoR nuclear receptor corepressor clearance from target genes such as IL1B and NOS2. Involved in the TLR9-mediated protective mechanism in intestinal inflammation. Plays an anti-inflammatory role in liver inflammation; proposed to inhibit pro-inflammatory (but not antiapoptotic) NF-kappa-B signaling. The polypeptide is Bile acid receptor (Nr1h4) (Rattus norvegicus (Rat)).